Reading from the N-terminus, the 445-residue chain is MKIFGTDGVRGKAGVKLTPMFVMRLGIAAGLYFKKHSKTNKILIGKDTRKSGYMVENALVSALTSIGYNVIQIGPMPTPAIAFLTEDMRCDAGIMISASHNPFEDNGIKFFNSYGYKLKEEEEKAIEEIFHDEELLHSSYKVGESVGSAKRIDDVIGRYIVHLKHSFPKHLNLQSLRIVLDTANGAAYKVAPVVFSELGADVLVINDEPNGCNINEQCGALHPNQLSQEVKKYRADLGFAFDGDADRLVVVDNLGNIVHGDKLLGVLGVYQKSKNALSSQAIVATSMSNLALKEYLKSQDLELKHCAIGDKFVSECMQLNKANFGGEQSGHIIFSDYAKTGDGLVCALQVSALVLESKQVSSVALNPFELYPQSLINLNIQKKPPLESLKGYSALLKELDKLEIRHLIRYSGTENKLRILLEAKDEKLLESKMQELKEFFEGHLC.

Catalysis depends on serine 99, which acts as the Phosphoserine intermediate. Serine 99, aspartate 242, aspartate 244, and aspartate 246 together coordinate Mg(2+). At serine 99 the chain carries Phosphoserine.

The protein belongs to the phosphohexose mutase family. Mg(2+) serves as cofactor. Activated by phosphorylation.

The catalysed reaction is alpha-D-glucosamine 1-phosphate = D-glucosamine 6-phosphate. Catalyzes the conversion of glucosamine-6-phosphate to glucosamine-1-phosphate. This chain is Phosphoglucosamine mutase, found in Helicobacter pylori (strain Shi470).